Reading from the N-terminus, the 61-residue chain is Cytotoxin 2 (61 aa).

4 cysteine pairs are disulfide-bonded: Cys-3–Cys-22, Cys-15–Cys-39, Cys-43–Cys-54, and Cys-55–Cys-60.

This sequence belongs to the three-finger toxin family. Short-chain subfamily. Type IB cytotoxin sub-subfamily. In terms of tissue distribution, expressed by the venom gland.

The protein localises to the secreted. Functionally, this protein lyses red blood cells, has cytotoxic activity and induces hypotension, but is not neurotoxic. In addition, it induces direct paralysis of the muscle fiber. This chain is Cytotoxin 2, found in Hemachatus haemachatus (Rinkhals).